The following is a 101-amino-acid chain: Large ribosomal subunit protein bL21 (101 aa).

The protein belongs to the bacterial ribosomal protein bL21 family. As to quaternary structure, part of the 50S ribosomal subunit. Contacts protein L20.

Functionally, this protein binds to 23S rRNA in the presence of protein L20. This is Large ribosomal subunit protein bL21 from Corynebacterium diphtheriae (strain ATCC 700971 / NCTC 13129 / Biotype gravis).